Here is a 499-residue protein sequence, read N- to C-terminus: MEFSVQSSTIEQLQTECLIVGVYQDHQLSSAAVQLDQVSGGYLTRLLQMGDLDGSVGQSLLLHNVPNIKSARVLLVGCGKQDELTESQYKKIMQQMMHAINATAVQQAVCFLTELMVKQRTIYWNIRFAIESIQASRYVYDVFKSIKAKVVGKLTQIIFNVANQQDLLEAERGLKHAQAIASGMIYAKNMANCPPNICNPAYLAELAQGLATDYQQIQTRIVDEAEMATLGMNAYLAVSQGSHNPAFLSVIEYNHHPDPSAKPIVLVGKGLTFDAGGISLKPSDAMDEMKYDMGGAAAVYGTMKALAEMQLPLNVVGILAGCENMPDGNAYRPGDILTTMNGLTVEVLNTDAEGRLVLCDALTYVERFDPACVIDIATLTGACMVALGTHNSGLMSTHNELADELFTAASQANDKVWRLPLGEEYQEQLKSNFADLANIGGRFGGAITAGQFLSNFTQKYRWAHLDIAGTAWQSGVAKGATGRPVPLLAQFLINRAQQE.

Lysine 269 and aspartate 274 together coordinate Mn(2+). Lysine 281 is an active-site residue. 3 residues coordinate Mn(2+): aspartate 292, aspartate 351, and glutamate 353. Arginine 355 is an active-site residue.

Belongs to the peptidase M17 family. Mn(2+) serves as cofactor.

Its subcellular location is the cytoplasm. It carries out the reaction Release of an N-terminal amino acid, Xaa-|-Yaa-, in which Xaa is preferably Leu, but may be other amino acids including Pro although not Arg or Lys, and Yaa may be Pro. Amino acid amides and methyl esters are also readily hydrolyzed, but rates on arylamides are exceedingly low.. The enzyme catalyses Release of an N-terminal amino acid, preferentially leucine, but not glutamic or aspartic acids.. In terms of biological role, presumably involved in the processing and regular turnover of intracellular proteins. Catalyzes the removal of unsubstituted N-terminal amino acids from various peptides. This Haemophilus ducreyi (strain 35000HP / ATCC 700724) protein is Probable cytosol aminopeptidase.